The sequence spans 68 residues: MQVSVRDNNVDQALRALKKKLQREGVFREMKLKQHFEKPSEKKAREKAEAIRRARKLARKKAQREGML.

It belongs to the bacterial ribosomal protein bS21 family.

The sequence is that of Small ribosomal subunit protein bS21 from Ruegeria pomeroyi (strain ATCC 700808 / DSM 15171 / DSS-3) (Silicibacter pomeroyi).